Reading from the N-terminus, the 403-residue chain is 8-amino-7-oxononanoate synthase (403 aa).

Arg-25 contributes to the substrate binding site. 112–113 contributes to the pyridoxal 5'-phosphate binding site; the sequence is GY. Residue His-137 coordinates substrate. The pyridoxal 5'-phosphate site is built by Ser-182, His-210, and Thr-239. Position 242 is an N6-(pyridoxal phosphate)lysine (Lys-242). Thr-358 serves as a coordination point for substrate.

It belongs to the class-II pyridoxal-phosphate-dependent aminotransferase family. BioF subfamily. In terms of assembly, homodimer. It depends on pyridoxal 5'-phosphate as a cofactor.

It catalyses the reaction 6-carboxyhexanoyl-[ACP] + L-alanine + H(+) = (8S)-8-amino-7-oxononanoate + holo-[ACP] + CO2. The protein operates within cofactor biosynthesis; biotin biosynthesis. Functionally, catalyzes the decarboxylative condensation of pimeloyl-[acyl-carrier protein] and L-alanine to produce 8-amino-7-oxononanoate (AON), [acyl-carrier protein], and carbon dioxide. In Marinomonas sp. (strain MWYL1), this protein is 8-amino-7-oxononanoate synthase.